The sequence spans 31 residues: 23S rRNA methylase leader peptide (31 aa).

This peptide is involved in the control mechanism of the synthesis of the erythromycin resistance protein. The protein is 23S rRNA methylase leader peptide (ermC) of Escherichia coli.